A 108-amino-acid polypeptide reads, in one-letter code: Large ribosomal subunit protein uL24 (108 aa).

The protein belongs to the universal ribosomal protein uL24 family. As to quaternary structure, part of the 50S ribosomal subunit.

One of two assembly initiator proteins, it binds directly to the 5'-end of the 23S rRNA, where it nucleates assembly of the 50S subunit. Functionally, one of the proteins that surrounds the polypeptide exit tunnel on the outside of the subunit. This Geobacter sulfurreducens (strain ATCC 51573 / DSM 12127 / PCA) protein is Large ribosomal subunit protein uL24.